The primary structure comprises 1046 residues: SWI/SNF-related matrix-associated actin-dependent regulator of chromatin subfamily A member 1 (1046 aa).

Positions 27–61 are disordered; the sequence is EQPGPSTFKEEGAAAAATEGTTATEKGEKKEKITS. Over residues 39-50 the composition is skewed to low complexity; sequence AAAAATEGTTAT. Phosphoserine occurs at positions 120 and 123. The Helicase ATP-binding domain maps to 199–364; sequence ISLYENGVNG…WALLNFLLPD (166 aa). Residue 212–219 participates in ATP binding; sequence DEMGLGKT. Positions 315–318 match the DEAH box motif; the sequence is DEAH. Positions 494–645 constitute a Helicase C-terminal domain; sequence ALDKLLARIK…SIVIQQGRLI (152 aa). Glycyl lysine isopeptide (Lys-Gly) (interchain with G-Cter in SUMO2) cross-links involve residues K654, K720, and K742. The disordered stretch occupies residues 819-840; the sequence is AQREEQKKIDGAEPLTPQETEE. Basic and acidic residues predominate over residues 820-829; that stretch reads QREEQKKIDG. The 53-residue stretch at 847–899 folds into the SANT 1 domain; that stretch reads QGFTNWTKRDFNQFIKANEKYGRDDIDNIAREVEGKSPEEVMEYSAVFWERCN. Position 946 is a phosphotyrosine (Y946). In terms of domain architecture, SANT 2 spans 950-1014; sequence KGKNYTEEED…QRRCNTLISL (65 aa). A coiled-coil region spans residues 1003-1037; sequence EFQRRCNTLISLIEKENMEIEERERAEKKKRATKT. The tract at residues 1025-1046 is disordered; sequence RERAEKKKRATKTPMVKFSAFS.

This sequence belongs to the SNF2/RAD54 helicase family. ISWI subfamily. May form homodimers. Component of the ACF-1 ISWI chromatin remodeling complex at least composed of SMARCA1 and BAZ1A, which regulates the spacing of histone octamers on the DNA template to facilitate access to DNA. Within the complex interacts with BAZ1A; the interaction is direct. Component of the WICH-1 ISWI chromatin remodeling complex at least composed of SMARCA1 and BAZ1B/WSTF. Within the complex interacts with BAZ1B/WSTF. Component of the NoRC-1 ISWI chromatin remodeling complex at least composed of SMARCA1 and BAZ2A/TIP5. Within the complex interacts with BAZ2A/TIP5. Component of the BRF-1 ISWI chromatin remodeling complex at least composed of SMARCA1 and BAZ2B. Within the complex interacts with BAZ2B. Component of the NURF-1 ISWI chromatin remodeling complex (also called the nucleosome-remodeling factor (NURF) complex) at least composed of SMARCA1, BPTF, RBBP4 and RBBP7. Within the complex interacts with BPTF. Within the complex interacts with RBBP4 and RBBP7. Component of the CERF-1 ISWI chromatin remodeling complex (also called the CECR2-containing-remodeling factor (CERF) complex) at least composed of CECR2 and SMARCA1. LUZP1 is detected as part of the CERF-1 complex in embryonic stem cells where it is involved in complex stabilization but is not detected in the complex in the testis. Component of the RSF-1 ISWI chromatin remodeling complex at least composed of SMARCA1 and RSF1. Within the complex interacts with RSF1. Interacts with PRLR. Interacts with ERCC6. Predominantly expressed in cortex, cerebellum, ovaries, testes, uterus and placenta.

The protein resides in the nucleus. The catalysed reaction is ATP + H2O = ADP + phosphate + H(+). ATPase that possesses intrinsic ATP-dependent chromatin-remodeling activity. ATPase activity is substrate-dependent, and is increased when nucleosomes are the substrate, but is also catalytically active when DNA alone is the substrate. Catalytic subunit of ISWI chromatin-remodeling complexes, which form ordered nucleosome arrays on chromatin and facilitate access to DNA during DNA-templated processes such as DNA replication, transcription, and repair. Within the ISWI chromatin-remodeling complexes, slides edge- and center-positioned histone octamers away from their original location on the DNA template. Catalytic activity and histone octamer sliding propensity is regulated and determined by components of the ISWI chromatin-remodeling complexes. The BAZ1A-, BAZ1B-, BAZ2A- and BAZ2B-containing ISWI chromatin-remodeling complexes regulate the spacing of nucleosomes along the chromatin and have the ability to slide mononucleosomes to the center of a DNA template. The CECR2- and RSF1-containing ISWI chromatin-remodeling complexes do not have the ability to slide mononucleosomes to the center of a DNA template. Within the NURF-1 and CERF-1 ISWI chromatin remodeling complexes, nucleosomes are the preferred substrate for its ATPase activity. Within the NURF-1 ISWI chromatin-remodeling complex, binds to the promoters of En1 and En2 to positively regulate their expression and promote brain development. May promote neurite outgrowth. May be involved in the development of luteal cells. Facilitates nucleosome assembly during DNA replication, ensuring replication fork progression and genomic stability by preventing replication stress and nascent DNA gaps. This Mus musculus (Mouse) protein is SWI/SNF-related matrix-associated actin-dependent regulator of chromatin subfamily A member 1 (Smarca1).